Reading from the N-terminus, the 1611-residue chain is Pentafunctional AROM polypeptide (1611 aa).

Residues 1 to 406 are 3-dehydroquinate synthase; the sequence is MSQVSGGKVP…VEERASTVSD (406 aa). NAD(+) contacts are provided by residues 64–66, 97–100, 128–130, and D133; these read DTN, EESK, and GGV. A 7-phospho-2-dehydro-3-deoxy-D-arabino-heptonate-binding site is contributed by R144. 153–154 is a binding site for NAD(+); that stretch reads TT. The 7-phospho-2-dehydro-3-deoxy-D-arabino-heptonate site is built by D160 and K166. An NAD(+)-binding site is contributed by K175. 7-phospho-2-dehydro-3-deoxy-D-arabino-heptonate is bound at residue N176. NAD(+)-binding positions include 193-196 and N204; that span reads WLLT. Residue E208 participates in Zn(2+) binding. 7-phospho-2-dehydro-3-deoxy-D-arabino-heptonate is bound by residues 208–211 and K272; that span reads EVIK. The Proton acceptor; for 3-dehydroquinate synthase activity role is filled by E282. 7-phospho-2-dehydro-3-deoxy-D-arabino-heptonate-binding positions include 286-290 and H293; that span reads RNLVN. Zn(2+) is bound at residue H293. The Proton acceptor; for 3-dehydroquinate synthase activity role is filled by H297. Positions 309 and 378 each coordinate 7-phospho-2-dehydro-3-deoxy-D-arabino-heptonate. Residue H309 coordinates Zn(2+). The interval 419 to 882 is EPSP synthase; sequence VRESVSAPRP…WDVLGGPLNV (464 aa). The active-site For EPSP synthase activity is C864. Residues 915 to 1092 are shikimate kinase; the sequence is DASIVLIGMR…VPISPAFFLS (178 aa). ATP is bound at residue 922–929; that stretch reads GMRASGKS. The tract at residues 1093–1309 is 3-dehydroquinase; that stretch reads LTFPRVQDAW…AAPGQMSVRD (217 aa). Catalysis depends on H1212, which acts as the Proton acceptor; for 3-dehydroquinate dehydratase activity. The Schiff-base intermediate with substrate; for 3-dehydroquinate dehydratase activity role is filled by K1240. A shikimate dehydrogenase region spans residues 1322 to 1611; it reads KRHFFLFGSP…AAYRAAAASM (290 aa).

In the N-terminal section; belongs to the sugar phosphate cyclases superfamily. Dehydroquinate synthase family. It in the 2nd section; belongs to the EPSP synthase family. The protein in the 3rd section; belongs to the shikimate kinase family. This sequence in the 4th section; belongs to the type-I 3-dehydroquinase family. In the C-terminal section; belongs to the shikimate dehydrogenase family. As to quaternary structure, homodimer. Zn(2+) serves as cofactor.

It localises to the cytoplasm. It carries out the reaction 7-phospho-2-dehydro-3-deoxy-D-arabino-heptonate = 3-dehydroquinate + phosphate. It catalyses the reaction 3-dehydroquinate = 3-dehydroshikimate + H2O. The catalysed reaction is shikimate + NADP(+) = 3-dehydroshikimate + NADPH + H(+). The enzyme catalyses shikimate + ATP = 3-phosphoshikimate + ADP + H(+). It carries out the reaction 3-phosphoshikimate + phosphoenolpyruvate = 5-O-(1-carboxyvinyl)-3-phosphoshikimate + phosphate. Its pathway is metabolic intermediate biosynthesis; chorismate biosynthesis; chorismate from D-erythrose 4-phosphate and phosphoenolpyruvate: step 2/7. The protein operates within metabolic intermediate biosynthesis; chorismate biosynthesis; chorismate from D-erythrose 4-phosphate and phosphoenolpyruvate: step 3/7. It participates in metabolic intermediate biosynthesis; chorismate biosynthesis; chorismate from D-erythrose 4-phosphate and phosphoenolpyruvate: step 4/7. It functions in the pathway metabolic intermediate biosynthesis; chorismate biosynthesis; chorismate from D-erythrose 4-phosphate and phosphoenolpyruvate: step 5/7. Its pathway is metabolic intermediate biosynthesis; chorismate biosynthesis; chorismate from D-erythrose 4-phosphate and phosphoenolpyruvate: step 6/7. Its function is as follows. The AROM polypeptide catalyzes 5 consecutive enzymatic reactions in prechorismate polyaromatic amino acid biosynthesis. This Malassezia globosa (strain ATCC MYA-4612 / CBS 7966) (Dandruff-associated fungus) protein is Pentafunctional AROM polypeptide.